A 902-amino-acid polypeptide reads, in one-letter code: Protein translocase subunit SecA (902 aa).

ATP-binding positions include glutamine 87, 105–109 (GEGKT), and aspartate 512. Disordered stretches follow at residues 565–584 (RRID…PGSS) and 840–902 (VEEQ…GKLK). 2 stretches are compositionally biased toward basic and acidic residues: residues 840–859 (VEEQ…HEDA) and 873–882 (QVREGAKVGR). Positions 886, 888, 897, and 898 each coordinate Zn(2+). The span at 892–902 (KKYKQCHGKLK) shows a compositional bias: basic residues.

Belongs to the SecA family. As to quaternary structure, monomer and homodimer. Part of the essential Sec protein translocation apparatus which comprises SecA, SecYEG and auxiliary proteins SecDF-YajC and YidC. Zn(2+) is required as a cofactor.

Its subcellular location is the cell inner membrane. It localises to the cytoplasm. It catalyses the reaction ATP + H2O + cellular proteinSide 1 = ADP + phosphate + cellular proteinSide 2.. Functionally, part of the Sec protein translocase complex. Interacts with the SecYEG preprotein conducting channel. Has a central role in coupling the hydrolysis of ATP to the transfer of proteins into and across the cell membrane, serving both as a receptor for the preprotein-SecB complex and as an ATP-driven molecular motor driving the stepwise translocation of polypeptide chains across the membrane. The protein is Protein translocase subunit SecA of Alteromonas mediterranea (strain DSM 17117 / CIP 110805 / LMG 28347 / Deep ecotype).